A 352-amino-acid chain; its full sequence is Beta-methylmalyl-CoA dehydratase (352 aa).

A MaoC-like domain is found at 16–129 (LGQTIVHATP…GKTGVVYVHS (114 aa)). Residues 62–65 (PIDS), 85–88 (IANL), and 96–98 (GAV) each bind substrate.

In terms of assembly, homodimer.

It catalyses the reaction (2R,3S)-beta-methylmalyl-CoA = 2-methylfumaryl-CoA + H2O. Involved in the glyoxylate assimilation cycle used to regenerate acetyl-CoA and produce pyruvate as universal precursor for biosynthesis. Catalyzes the reversible dehydration of beta-methylmalyl-CoA ((2R,3S)-beta-methylmalyl-CoA) to yield mesaconyl-CoA (2-methylfumaryl-CoA). In Chloroflexus aurantiacus (strain ATCC 29366 / DSM 635 / J-10-fl), this protein is Beta-methylmalyl-CoA dehydratase (mch).